We begin with the raw amino-acid sequence, 152 residues long: Ribosome maturation factor RimP (152 aa).

It belongs to the RimP family.

The protein resides in the cytoplasm. Required for maturation of 30S ribosomal subunits. This Shigella boydii serotype 4 (strain Sb227) protein is Ribosome maturation factor RimP.